A 258-amino-acid polypeptide reads, in one-letter code: Glucanase inhibitor protein 1 (258 aa).

The first 19 residues, 1-19, serve as a signal peptide directing secretion; it reads MRVVPTLAAASLALGAVAG. A Peptidase S1 domain is found at 27 to 254; that stretch reads ILGGGEVPIG…AIEWITSVTK (228 aa). C54 and C70 are disulfide-bonded. N-linked (GlcNAc...) asparagine glycosylation is found at N87, N102, N107, N157, and N185. 2 disulfide bridges follow: C177–C189 and C199–C230.

This sequence belongs to the peptidase S1 family. In terms of assembly, forms an apoplastic complex with host endoglucanases in tomato leaves during P.infestans infection.

The protein localises to the secreted. Its function is as follows. Secreted effector that suppresses host plant glucan elicitor-mediated defense responses. Targets host endoglucanases and inhibits the endoglucanase-mediated release of elicitor-active glucan oligosaccharides from P.infestans cell walls. The sequence is that of Glucanase inhibitor protein 1 from Phytophthora infestans (Potato late blight agent).